Consider the following 776-residue polypeptide: MRSLIYRQLLTNSYTVDLSDEIESIGSKNTQNVTINPGPFAQTGYAPVNWGPGEVNDSTTVEPTLDGPYQPTSFNPPVNYWMLLAPLNAGVIVEGTNNTNRWLATILVEPGVASTTRTYTLFGIQEQITVENSSNTKWKFIDLMKTTSSGTYTQHSPLLSEPKLYGIMKHGGQLWTYNGETPNAITNGYPTTNYDSVNMTSFCNFYIIPRSQESVRTGYINNGLPPIQNTRNIVPVSISSRSIIHQRAQANEDIIVSKTSLWKEMKYNRDITIRFKFANAIIKSGGLGYKWSEISFKPANYQYTYTRDGEEVNAHTTCSVNGVNDFSFNGGSLPTDFVISRYEVIKENSYVYVDYWDDSQAFRNMVYVRSLAADLNDVLCTGGDYSFALPVGQWPVMTGGAVSLHSAGVTLSTQFTDFVSLNSLRFRFRLSVEEPHFSITRTRVTGLYGLPAANPNNNNEYYEVAGRFSLISLVPSNDDYQTPIANSVTVRQDLERQLGELREEFNALSQEIAMSQLIDLALLPLDMFSMFSGIKSTIDAAKSMATNVMKKFKKSGLATSVSTLTDSLSDAASSISRGSSIRSIGSSASAWTDVSTQLIDVSSTVNTISTQTSTISRRLRLKEIATQTEGMNFDDISAAVLKTKIDRSTQIAPATLPDIVTEASEKFIPNRAYRVMDNNEVLEASTDGRLCAYRVETFEEIPFDVQKFADLVTDSPVISAIIDFKTLKNLNDNYGISREQAFNLLRSDPRMLREFINQDNPIIRNRIEQLILQCRL.

The tract at residues 65-224 is spike head; that stretch reads LDGPYQPTSF…VRTGYINNGL (160 aa). The interval 248 to 479 is spike body and stalk (antigen domain); the sequence is AQANEDIIVS…LISLVPSNDD (232 aa). The DGE motif; interaction with ITGA2/ITGB1 heterodimer motif lies at 308 to 310; it reads DGE. Cys-318 and Cys-380 are oxidised to a cystine. The interval 389–409 is hydrophobic; possible role in virus entry into host cell; sequence LPVGQWPVMTGGAVSLHSAGV. The short motif at 448-450 is the YGL motif; interaction with ITGA4 element; sequence YGL. Residues 484–511 are a coiled coil; the sequence is IANSVTVRQDLERQLGELREEFNALSQE. The interval 510 to 776 is spike foot; it reads QEIAMSQLID…IEQLILQCRL (267 aa). Residues 644-646 carry the KID motif; interaction with HSPA8 motif; the sequence is KID.

The protein belongs to the rotavirus VP4 family. As to quaternary structure, homotrimer. VP4 adopts a dimeric appearance above the capsid surface, while forming a trimeric base anchored inside the capsid layer. Only hints of the third molecule are observed above the capsid surface. It probably performs a series of molecular rearrangements during viral entry. Prior to trypsin cleavage, it is flexible. The priming trypsin cleavage triggers its rearrangement into rigid spikes with approximate two-fold symmetry of their protruding parts. After an unknown second triggering event, cleaved VP4 may undergo another rearrangement, in which two VP5* subunits fold back on themselves and join a third subunit to form a tightly associated trimer, shaped like a folded umbrella. Interacts with VP6. Interacts with VP7. In terms of assembly, homotrimer. The trimer is coiled-coil stabilized by its C-terminus, however, its N-terminus, known as antigen domain or 'body', seems to be flexible allowing it to self-associate either as a dimer or a trimer. Post-translationally, proteolytic cleavage by trypsin results in activation of VP4 functions and greatly increases infectivity. The penetration into the host cell is dependent on trypsin treatment of VP4. It produces two peptides, VP5* and VP8* that remain associated with the virion. Cleavage of VP4 by trypsin probably occurs in vivo in the lumen of the intestine prior to infection of enterocytes. Trypsin seems to be incorporated into the three-layered viral particles but remains inactive as long as the viral outer capsid is intact and would only be activated upon the solubilization of the latter.

It is found in the virion. Its subcellular location is the host rough endoplasmic reticulum. The protein resides in the host cell membrane. The protein localises to the host cytoplasm. It localises to the host cytoskeleton. It is found in the host endoplasmic reticulum-Golgi intermediate compartment. Its function is as follows. Spike-forming protein that mediates virion attachment to the host epithelial cell receptors and plays a major role in cell penetration, determination of host range restriction and virulence. Rotavirus attachment and entry into the host cell probably involves multiple sequential contacts between the outer capsid proteins VP4 and VP7, and the cell receptors. It is subsequently lost, together with VP7, following virus entry into the host cell. Following entry into the host cell, low intracellular or intravesicular Ca(2+) concentration probably causes the calcium-stabilized VP7 trimers to dissociate from the virion. This step is probably necessary for the membrane-disrupting entry step and the release of VP4, which is locked onto the virion by VP7. During the virus exit from the host cell, VP4 seems to be required to target the newly formed virions to the host cell lipid rafts. In terms of biological role, forms the spike 'foot' and 'body' and acts as a membrane permeabilization protein that mediates release of viral particles from endosomal compartments into the cytoplasm. During entry, the part of VP5* that protrudes from the virus folds back on itself and reorganizes from a local dimer to a trimer. This reorganization may be linked to membrane penetration by exposing VP5* hydrophobic region. In integrin-dependent strains, VP5* targets the integrin heterodimer ITGA2/ITGB1 for cell attachment. Forms the head of the spikes and mediates the recognition of specific host cell surface glycans. It is the viral hemagglutinin and an important target of neutralizing antibodies. In sialic acid-dependent strains, VP8* binds to host cell sialic acid, most probably a ganglioside, providing the initial contact. In some other strains, VP8* mediates the attachment to histo-blood group antigens (HBGAs) for viral entry. The polypeptide is Outer capsid protein VP4 (Rotavirus A (strain RVA/Human/Indonesia/69M/1980/G8P4[10]) (RV-A)).